Consider the following 435-residue polypeptide: Shikimate O-hydroxycinnamoyltransferase (435 aa).

Active-site proton acceptor residues include H153 and D382.

This sequence belongs to the plant acyltransferase family. In terms of tissue distribution, highly expressed in stem vascular tissues.

The catalysed reaction is shikimate + 4-coumaroyl-CoA = trans-4-coumaroylshikimate + CoA. Its function is as follows. Acyltransferase involved in the biosynthesis of lignin. The affinity for shikimate as acceptor is 100-fold higher than for quinate. The most efficient donors are caffeoyl-CoA &gt; p-coumaroyl-CoA &gt; feruloyl-CoA &gt;&gt; sinapoyl-CoA. The protein is Shikimate O-hydroxycinnamoyltransferase (HST) of Nicotiana tabacum (Common tobacco).